Here is a 396-residue protein sequence, read N- to C-terminus: 1-deoxy-D-xylulose 5-phosphate reductoisomerase (396 aa).

NADPH is bound by residues Thr-10, Gly-11, Ser-12, Ile-13, Asn-38, and Asn-123. Residue Lys-124 participates in 1-deoxy-D-xylulose 5-phosphate binding. Glu-125 serves as a coordination point for NADPH. Asp-149 contributes to the Mn(2+) binding site. 1-deoxy-D-xylulose 5-phosphate contacts are provided by Ser-150, Glu-151, Ser-185, and His-208. Residue Glu-151 participates in Mn(2+) binding. Position 214 (Gly-214) interacts with NADPH. Ser-221, Asn-226, Lys-227, and Glu-230 together coordinate 1-deoxy-D-xylulose 5-phosphate. Position 230 (Glu-230) interacts with Mn(2+).

It belongs to the DXR family. Mg(2+) serves as cofactor. Mn(2+) is required as a cofactor.

The enzyme catalyses 2-C-methyl-D-erythritol 4-phosphate + NADP(+) = 1-deoxy-D-xylulose 5-phosphate + NADPH + H(+). Its pathway is isoprenoid biosynthesis; isopentenyl diphosphate biosynthesis via DXP pathway; isopentenyl diphosphate from 1-deoxy-D-xylulose 5-phosphate: step 1/6. Catalyzes the NADPH-dependent rearrangement and reduction of 1-deoxy-D-xylulose-5-phosphate (DXP) to 2-C-methyl-D-erythritol 4-phosphate (MEP). In Shewanella halifaxensis (strain HAW-EB4), this protein is 1-deoxy-D-xylulose 5-phosphate reductoisomerase.